A 177-amino-acid chain; its full sequence is Putative peroxiredoxin (177 aa).

In terms of domain architecture, Thioredoxin spans 8–177; the sequence is TAKGNEIPDT…ASIDTILTKV (170 aa). The active-site Cysteine sulfenic acid (-SOH) intermediate is the Cys64. A Microbody targeting signal motif is present at residues 175–177; the sequence is TKV.

It belongs to the peroxiredoxin family. Prx5 subfamily. In terms of assembly, homodimer; disulfide-linked, upon oxidation.

It catalyses the reaction a hydroperoxide + [thioredoxin]-dithiol = an alcohol + [thioredoxin]-disulfide + H2O. In terms of biological role, thiol-specific peroxidase that catalyzes the reduction of hydrogen peroxide and organic hydroperoxides to water and alcohols, respectively. Plays a role in cell protection against oxidative stress by detoxifying peroxides and as sensor of hydrogen peroxide-mediated signaling events. This chain is Putative peroxiredoxin, found in Malassezia furfur (Pityriasis versicolor infection agent).